The following is a 370-amino-acid chain: UPF0284 protein PCC7424_2681 (370 aa).

It belongs to the UPF0284 family.

The chain is UPF0284 protein PCC7424_2681 from Gloeothece citriformis (strain PCC 7424) (Cyanothece sp. (strain PCC 7424)).